We begin with the raw amino-acid sequence, 235 residues long: Phosphoribosylaminoimidazole-succinocarboxamide synthase (235 aa).

The protein belongs to the SAICAR synthetase family.

It catalyses the reaction 5-amino-1-(5-phospho-D-ribosyl)imidazole-4-carboxylate + L-aspartate + ATP = (2S)-2-[5-amino-1-(5-phospho-beta-D-ribosyl)imidazole-4-carboxamido]succinate + ADP + phosphate + 2 H(+). It functions in the pathway purine metabolism; IMP biosynthesis via de novo pathway; 5-amino-1-(5-phospho-D-ribosyl)imidazole-4-carboxamide from 5-amino-1-(5-phospho-D-ribosyl)imidazole-4-carboxylate: step 1/2. The protein is Phosphoribosylaminoimidazole-succinocarboxamide synthase of Streptococcus gordonii (strain Challis / ATCC 35105 / BCRC 15272 / CH1 / DL1 / V288).